A 206-amino-acid chain; its full sequence is Small ribosomal subunit protein uS4 (206 aa).

The disordered stretch occupies residues 18–46; the sequence is NIWGRPKSPVNRREYGPGQHGQRRKGKLS. Positions 94 to 156 constitute an S4 RNA-binding domain; it reads RRLDAVVYRA…SKQNVAVLEA (63 aa).

Belongs to the universal ribosomal protein uS4 family. Part of the 30S ribosomal subunit. Contacts protein S5. The interaction surface between S4 and S5 is involved in control of translational fidelity.

Functionally, one of the primary rRNA binding proteins, it binds directly to 16S rRNA where it nucleates assembly of the body of the 30S subunit. With S5 and S12 plays an important role in translational accuracy. This chain is Small ribosomal subunit protein uS4, found in Ruegeria sp. (strain TM1040) (Silicibacter sp.).